The chain runs to 228 residues: Endonuclease V (228 aa).

Mg(2+) is bound by residues Asp-36 and Asp-104.

This sequence belongs to the endonuclease V family. It depends on Mg(2+) as a cofactor.

It localises to the cytoplasm. The enzyme catalyses Endonucleolytic cleavage at apurinic or apyrimidinic sites to products with a 5'-phosphate.. Its function is as follows. DNA repair enzyme involved in the repair of deaminated bases. Selectively cleaves double-stranded DNA at the second phosphodiester bond 3' to a deoxyinosine leaving behind the intact lesion on the nicked DNA. The chain is Endonuclease V from Serratia proteamaculans (strain 568).